The chain runs to 115 residues: Large ribosomal subunit protein bL20 (115 aa).

This sequence belongs to the bacterial ribosomal protein bL20 family.

Functionally, binds directly to 23S ribosomal RNA and is necessary for the in vitro assembly process of the 50S ribosomal subunit. It is not involved in the protein synthesizing functions of that subunit. The sequence is that of Large ribosomal subunit protein bL20 from Bdellovibrio bacteriovorus (strain ATCC 15356 / DSM 50701 / NCIMB 9529 / HD100).